The following is a 5085-amino-acid chain: Linear gramicidin synthase subunit D (5085 aa).

Carrier domains are found at residues 962–1037, 2023–2097, 3544–3619, and 4601–4676; these read APRT…AAAG, SPST…EEKA, APRN…ELLT, and APQT…EEII. Ser997, Ser2058, Ser3579, and Ser4636 each carry O-(pantetheine 4'-phosphoryl)serine.

This sequence belongs to the ATP-dependent AMP-binding enzyme family. In terms of assembly, large multienzyme complex composed of 4 subunits; LgrA, LgrB, LgrC and LgrD. The cofactor is pantetheine 4'-phosphate.

In terms of biological role, activates the 13th to the 16th (Trp, D-Leu, Trp and Gly) amino acids in linear gramicidin and catalyzes the formation of the peptide bond between them. This enzyme is also responsible for the epimerization of the 14th (D-Leu) amino acid. It also catalyzes the NAD(P)H-dependent reduction of the C-terminal glycine residue of the N-formylated 16-mer peptide, that binds to the peptidyl carrier domain of the terminal module of this protein, to form a peptidyl-aldehyde intermediate that is released from the enzyme complex. This chain is Linear gramicidin synthase subunit D (lgrD), found in Brevibacillus parabrevis.